Reading from the N-terminus, the 436-residue chain is tRNA(Ile)-lysidine synthase (436 aa).

Position 25 to 30 (25 to 30 (SGGLDS)) interacts with ATP.

Belongs to the tRNA(Ile)-lysidine synthase family.

It localises to the cytoplasm. The enzyme catalyses cytidine(34) in tRNA(Ile2) + L-lysine + ATP = lysidine(34) in tRNA(Ile2) + AMP + diphosphate + H(+). Ligates lysine onto the cytidine present at position 34 of the AUA codon-specific tRNA(Ile) that contains the anticodon CAU, in an ATP-dependent manner. Cytidine is converted to lysidine, thus changing the amino acid specificity of the tRNA from methionine to isoleucine. This is tRNA(Ile)-lysidine synthase from Serratia proteamaculans (strain 568).